The following is a 153-amino-acid chain: Glucose-6-phosphate 1-dehydrogenase (153 aa).

NADP(+) contacts are provided by arginine 21 and lysine 120. Residue lysine 120 participates in D-glucose 6-phosphate binding.

The protein belongs to the glucose-6-phosphate dehydrogenase family.

The protein resides in the cytoplasm. It is found in the cytosol. The catalysed reaction is D-glucose 6-phosphate + NADP(+) = 6-phospho-D-glucono-1,5-lactone + NADPH + H(+). It participates in carbohydrate degradation; pentose phosphate pathway; D-ribulose 5-phosphate from D-glucose 6-phosphate (oxidative stage): step 1/3. Cytosolic glucose-6-phosphate dehydrogenase that catalyzes the first and rate-limiting step of the oxidative branch within the pentose phosphate pathway/shunt, an alternative route to glycolysis for the dissimilation of carbohydrates and a major source of reducing power and metabolic intermediates for fatty acid and nucleic acid biosynthetic processes. This chain is Glucose-6-phosphate 1-dehydrogenase (ZW), found in Culex pipiens (House mosquito).